Consider the following 417-residue polypeptide: Serine hydroxymethyltransferase (417 aa).

Residues L119 and 123–125 each bind (6S)-5,6,7,8-tetrahydrofolate; that span reads GHL. K227 is modified (N6-(pyridoxal phosphate)lysine).

Belongs to the SHMT family. In terms of assembly, homodimer. Requires pyridoxal 5'-phosphate as cofactor.

The protein resides in the cytoplasm. The enzyme catalyses (6R)-5,10-methylene-5,6,7,8-tetrahydrofolate + glycine + H2O = (6S)-5,6,7,8-tetrahydrofolate + L-serine. It participates in one-carbon metabolism; tetrahydrofolate interconversion. The protein operates within amino-acid biosynthesis; glycine biosynthesis; glycine from L-serine: step 1/1. Catalyzes the reversible interconversion of serine and glycine with tetrahydrofolate (THF) serving as the one-carbon carrier. This reaction serves as the major source of one-carbon groups required for the biosynthesis of purines, thymidylate, methionine, and other important biomolecules. Also exhibits THF-independent aldolase activity toward beta-hydroxyamino acids, producing glycine and aldehydes, via a retro-aldol mechanism. This is Serine hydroxymethyltransferase from Buchnera aphidicola subsp. Cinara cedri (strain Cc).